Reading from the N-terminus, the 375-residue chain is All-trans-retinol dehydrogenase [NAD(+)] ADH1B (375 aa).

Residue serine 2 is modified to N-acetylserine. At serine 23 the chain carries Phosphoserine. A Phosphotyrosine modification is found at tyrosine 35. Cysteine 47, histidine 68, cysteine 98, cysteine 101, cysteine 104, cysteine 112, and cysteine 175 together coordinate Zn(2+). NAD(+) is bound by residues 200–205, aspartate 224, lysine 229, 293–295, and arginine 370; these read GLGGVG and VGV.

This sequence belongs to the zinc-containing alcohol dehydrogenase family. As to quaternary structure, homodimer or heterodimer of closely related subunits. It depends on Zn(2+) as a cofactor. Expressed in liver.

Its subcellular location is the cytoplasm. The catalysed reaction is all-trans-retinol + NAD(+) = all-trans-retinal + NADH + H(+). The enzyme catalyses all-trans-4-hydroxyretinol + NAD(+) = all-trans-4-hydroxyretinal + NADH + H(+). It catalyses the reaction all-trans-4-oxoretinol + NAD(+) = all-trans-4-oxoretinal + NADH + H(+). Its function is as follows. Catalyzes the NAD-dependent oxidation of all-trans-retinol and its derivatives such as all-trans-4-hydroxyretinol and may participate in retinoid metabolism. In vitro can also catalyze the NADH-dependent reduction of all-trans-retinal and its derivatives such as all-trans-4-oxoretinal. Catalyzes in the oxidative direction with higher efficiency. Has the same affinity for all-trans-4-hydroxyretinol and all-trans-4-oxoretinal. The sequence is that of All-trans-retinol dehydrogenase [NAD(+)] ADH1B from Papio hamadryas (Hamadryas baboon).